Consider the following 209-residue polypeptide: Probable glutathione peroxidase 8-B (209 aa).

A helical membrane pass occupies residues 18-40; it reads VFLVFFSMVLCTGILCVLQLKFL. C79 is an active-site residue.

The protein belongs to the glutathione peroxidase family.

Its subcellular location is the membrane. The enzyme catalyses 2 glutathione + H2O2 = glutathione disulfide + 2 H2O. The sequence is that of Probable glutathione peroxidase 8-B (gpx8-b) from Xenopus laevis (African clawed frog).